We begin with the raw amino-acid sequence, 183 residues long: MAMNTETLSLIKQSIKTIPNYPKEGILFRDVTSLLENAAAYKATIDLLVEQYRNKGFTKIVGTEARGFLFGAPLALELGIGFVPVRKPGKLPRATISQSYELEYGHDSLEIHTDAITANDKVLVVDDLLATGGTIEATVKLIRQLGGEVQDAAFVISLPDLGGEARLTALGLELVKLCEFEGE.

Belongs to the purine/pyrimidine phosphoribosyltransferase family. Homodimer.

It is found in the cytoplasm. It carries out the reaction AMP + diphosphate = 5-phospho-alpha-D-ribose 1-diphosphate + adenine. It participates in purine metabolism; AMP biosynthesis via salvage pathway; AMP from adenine: step 1/1. Catalyzes a salvage reaction resulting in the formation of AMP, that is energically less costly than de novo synthesis. The sequence is that of Adenine phosphoribosyltransferase from Shewanella sp. (strain ANA-3).